A 1070-amino-acid polypeptide reads, in one-letter code: Carbamoyl phosphate synthase large chain (1070 aa).

Residues 1-401 are carboxyphosphate synthetic domain; that stretch reads MPKRDDIKTI…ALLKAVRSLE (401 aa). The ATP site is built by R129, R169, G175, G176, K208, I210, E215, G241, I242, H243, Q284, and E298. One can recognise an ATP-grasp 1 domain in the interval 133–327; the sequence is RDLMNELGEP…IAKLAAKIAV (195 aa). Mg(2+) is bound by residues Q284, E298, and N300. Residues Q284, E298, and N300 each coordinate Mn(2+). Positions 402-546 are oligomerization domain; that stretch reads IGADHLLLEE…YSTYEEENES (145 aa). The interval 547 to 929 is carbamoyl phosphate synthetic domain; it reads TRSAKESVIV…ALYKGFVASG (383 aa). Residues 671-861 enclose the ATP-grasp 2 domain; that stretch reads EKALGILQIP…MANVATRVIL (191 aa). Residues R707, R746, V748, E752, G777, V778, H779, S780, Q820, and E832 each coordinate ATP. Mg(2+) is bound by residues Q820, E832, and N834. 3 residues coordinate Mn(2+): Q820, E832, and N834. Positions 930–1070 constitute an MGS-like domain; that stretch reads TTMHDYGTVL…SEVKQPKARV (141 aa). The segment at 930–1070 is allosteric domain; sequence TTMHDYGTVL…SEVKQPKARV (141 aa).

Belongs to the CarB family. As to quaternary structure, composed of two chains; the small (or glutamine) chain promotes the hydrolysis of glutamine to ammonia, which is used by the large (or ammonia) chain to synthesize carbamoyl phosphate. Tetramer of heterodimers (alpha,beta)4. It depends on Mg(2+) as a cofactor. Mn(2+) is required as a cofactor.

It carries out the reaction hydrogencarbonate + L-glutamine + 2 ATP + H2O = carbamoyl phosphate + L-glutamate + 2 ADP + phosphate + 2 H(+). It catalyses the reaction hydrogencarbonate + NH4(+) + 2 ATP = carbamoyl phosphate + 2 ADP + phosphate + 2 H(+). Its pathway is amino-acid biosynthesis; L-arginine biosynthesis; carbamoyl phosphate from bicarbonate: step 1/1. It functions in the pathway pyrimidine metabolism; UMP biosynthesis via de novo pathway; (S)-dihydroorotate from bicarbonate: step 1/3. Functionally, large subunit of the glutamine-dependent carbamoyl phosphate synthetase (CPSase). CPSase catalyzes the formation of carbamoyl phosphate from the ammonia moiety of glutamine, carbonate, and phosphate donated by ATP, constituting the first step of 2 biosynthetic pathways, one leading to arginine and/or urea and the other to pyrimidine nucleotides. The large subunit (synthetase) binds the substrates ammonia (free or transferred from glutamine from the small subunit), hydrogencarbonate and ATP and carries out an ATP-coupled ligase reaction, activating hydrogencarbonate by forming carboxy phosphate which reacts with ammonia to form carbamoyl phosphate. The protein is Carbamoyl phosphate synthase large chain of Listeria monocytogenes serotype 4b (strain CLIP80459).